The primary structure comprises 360 residues: Phospho-N-acetylmuramoyl-pentapeptide-transferase (360 aa).

A run of 10 helical transmembrane segments spans residues 21 to 41 (YLSF…LWMG), 73 to 93 (TMGG…WADL), 94 to 114 (SNPY…VGFV), 132 to 152 (WKYF…YAHG), 168 to 188 (VMPQ…VGTS), 199 to 219 (GLAI…AWAT), 239 to 259 (LVVV…FNTY), 263 to 283 (VFMG…IAVL), 288 to 308 (LVLV…ILQV), and 338 to 358 (VIVR…ATLK).

This sequence belongs to the glycosyltransferase 4 family. MraY subfamily. Mg(2+) serves as cofactor.

It is found in the cell inner membrane. The catalysed reaction is UDP-N-acetyl-alpha-D-muramoyl-L-alanyl-gamma-D-glutamyl-meso-2,6-diaminopimeloyl-D-alanyl-D-alanine + di-trans,octa-cis-undecaprenyl phosphate = di-trans,octa-cis-undecaprenyl diphospho-N-acetyl-alpha-D-muramoyl-L-alanyl-D-glutamyl-meso-2,6-diaminopimeloyl-D-alanyl-D-alanine + UMP. Its pathway is cell wall biogenesis; peptidoglycan biosynthesis. Its function is as follows. Catalyzes the initial step of the lipid cycle reactions in the biosynthesis of the cell wall peptidoglycan: transfers peptidoglycan precursor phospho-MurNAc-pentapeptide from UDP-MurNAc-pentapeptide onto the lipid carrier undecaprenyl phosphate, yielding undecaprenyl-pyrophosphoryl-MurNAc-pentapeptide, known as lipid I. This chain is Phospho-N-acetylmuramoyl-pentapeptide-transferase, found in Vibrio atlanticus (strain LGP32) (Vibrio splendidus (strain Mel32)).